A 260-amino-acid polypeptide reads, in one-letter code: Snake venom serine protease homolog 1 (260 aa).

The first 18 residues, 1-18 (MVLIRVLANLLLLQLSYA), serve as a signal peptide directing secretion. Residues 19-24 (QESSEL) constitute a propeptide that is removed on maturation. The Peptidase S1 domain occupies 25–251 (VIGGDECDIN…YTDWIEGIIA (227 aa)). Disulfide bonds link cysteine 31/cysteine 165, cysteine 52/cysteine 68, cysteine 100/cysteine 258, cysteine 144/cysteine 212, cysteine 176/cysteine 191, and cysteine 202/cysteine 227. Asparagine 253 carries an N-linked (GlcNAc...) asparagine glycan.

This sequence belongs to the peptidase S1 family. Snake venom subfamily. As to expression, expressed by the venom gland.

The protein localises to the secreted. Functionally, snake venom serine protease homolog that may act in the hemostasis system of the prey. This chain is Snake venom serine protease homolog 1, found in Bitis gabonica (Gaboon adder).